The primary structure comprises 364 residues: Phosphoserine aminotransferase (364 aa).

Arginine 46 contributes to the L-glutamate binding site. Residues 80-81, tryptophan 106, threonine 157, aspartate 176, and glutamine 199 each bind pyridoxal 5'-phosphate; that span reads AR. The residue at position 200 (lysine 200) is an N6-(pyridoxal phosphate)lysine. 241–242 is a pyridoxal 5'-phosphate binding site; that stretch reads NT.

It belongs to the class-V pyridoxal-phosphate-dependent aminotransferase family. SerC subfamily. In terms of assembly, homodimer. Pyridoxal 5'-phosphate serves as cofactor.

It is found in the cytoplasm. The catalysed reaction is O-phospho-L-serine + 2-oxoglutarate = 3-phosphooxypyruvate + L-glutamate. It carries out the reaction 4-(phosphooxy)-L-threonine + 2-oxoglutarate = (R)-3-hydroxy-2-oxo-4-phosphooxybutanoate + L-glutamate. It participates in amino-acid biosynthesis; L-serine biosynthesis; L-serine from 3-phospho-D-glycerate: step 2/3. It functions in the pathway cofactor biosynthesis; pyridoxine 5'-phosphate biosynthesis; pyridoxine 5'-phosphate from D-erythrose 4-phosphate: step 3/5. Functionally, catalyzes the reversible conversion of 3-phosphohydroxypyruvate to phosphoserine and of 3-hydroxy-2-oxo-4-phosphonooxybutanoate to phosphohydroxythreonine. The protein is Phosphoserine aminotransferase of Vibrio parahaemolyticus serotype O3:K6 (strain RIMD 2210633).